Consider the following 578-residue polypeptide: MLNAVGHGGRAAVGPVMGKIMAERPDLRPQAKQIVAIVREVVEEVNKLSLEEQKRLLEEKYSWVIEKKLQKRREAVEKKLPPLPDAEEGRVVTRFAPNPDFVIHLGNARPALLSYEYAVMYRGKMILRFEDTDPRIKTPLPEAYELIREDLKWLGIRWDEEYIQSLRMHIYYDIARKLIEVGGAYVDDRSPEEFRRYRDEGRLEDYPPRKRSVEENLELWDKMVSGAFGEGEAVLRVKTDPRHPDPSVRDWVAFRIIDTSRYPHPLVGDRYVAWPTYNFAAAVDDKLMGVTHILRAKEHMQNTIKQQFLYKHLGWSYPHVVHFGRLKLEGFIMSKSTLKRFLDAGISRGIDDPRFATIAGLRRRGIVPEAIKKLIMEVGVKYTDASISYDNLAAINRSIIDPRAKRIMAALSPVPVEVEGLPWREKEFRIPFHPSGQLGERIVKLAGPKATIYVSQSDAVQLAKGNIVRLMEAFNIEVLGASPRRVRARYHSLTVDEARQHNAPIIQWVPATDNIAVEVLKPEGLDLVQERGLAEPAAAQLKPGEIIQLVRIGFARVDSVETDEKGKVRKVVLIYAHD.

A 'HIGH' region motif is present at residues 97–107 (PNPDFVIHLGN).

It belongs to the class-I aminoacyl-tRNA synthetase family. Glutamate--tRNA ligase type 2 subfamily.

It localises to the cytoplasm. It carries out the reaction tRNA(Glu) + L-glutamate + ATP = L-glutamyl-tRNA(Glu) + AMP + diphosphate. In terms of biological role, catalyzes the attachment of glutamate to tRNA(Glu) in a two-step reaction: glutamate is first activated by ATP to form Glu-AMP and then transferred to the acceptor end of tRNA(Glu). The chain is Glutamate--tRNA ligase from Hyperthermus butylicus (strain DSM 5456 / JCM 9403 / PLM1-5).